The sequence spans 291 residues: Bifunctional protein FolD (291 aa).

NADP(+) is bound by residues 168-170 (GRG), T195, and V236.

Belongs to the tetrahydrofolate dehydrogenase/cyclohydrolase family. Homodimer.

The catalysed reaction is (6R)-5,10-methylene-5,6,7,8-tetrahydrofolate + NADP(+) = (6R)-5,10-methenyltetrahydrofolate + NADPH. It catalyses the reaction (6R)-5,10-methenyltetrahydrofolate + H2O = (6R)-10-formyltetrahydrofolate + H(+). The protein operates within one-carbon metabolism; tetrahydrofolate interconversion. Its function is as follows. Catalyzes the oxidation of 5,10-methylenetetrahydrofolate to 5,10-methenyltetrahydrofolate and then the hydrolysis of 5,10-methenyltetrahydrofolate to 10-formyltetrahydrofolate. This is Bifunctional protein FolD from Bifidobacterium longum (strain DJO10A).